The following is a 282-amino-acid chain: Ribosomal RNA small subunit methyltransferase A (282 aa).

The tract at residues 1–21 is disordered; it reads MPDFPKEHATPMSNRPPAHQA. Residues Asn-28, Leu-30, Gly-55, Glu-76, Asp-101, and Asn-126 each coordinate S-adenosyl-L-methionine.

It belongs to the class I-like SAM-binding methyltransferase superfamily. rRNA adenine N(6)-methyltransferase family. RsmA subfamily.

It is found in the cytoplasm. The catalysed reaction is adenosine(1518)/adenosine(1519) in 16S rRNA + 4 S-adenosyl-L-methionine = N(6)-dimethyladenosine(1518)/N(6)-dimethyladenosine(1519) in 16S rRNA + 4 S-adenosyl-L-homocysteine + 4 H(+). Its function is as follows. Specifically dimethylates two adjacent adenosines (A1518 and A1519) in the loop of a conserved hairpin near the 3'-end of 16S rRNA in the 30S particle. May play a critical role in biogenesis of 30S subunits. The protein is Ribosomal RNA small subunit methyltransferase A of Chromohalobacter salexigens (strain ATCC BAA-138 / DSM 3043 / CIP 106854 / NCIMB 13768 / 1H11).